The primary structure comprises 205 residues: Urease accessory protein UreG (205 aa).

14–21 (GPVGSGKT) contributes to the GTP binding site.

The protein belongs to the SIMIBI class G3E GTPase family. UreG subfamily. Homodimer. UreD, UreF and UreG form a complex that acts as a GTP-hydrolysis-dependent molecular chaperone, activating the urease apoprotein by helping to assemble the nickel containing metallocenter of UreC. The UreE protein probably delivers the nickel.

The protein resides in the cytoplasm. Facilitates the functional incorporation of the urease nickel metallocenter. This process requires GTP hydrolysis, probably effectuated by UreG. This Enterobacter sp. (strain 638) protein is Urease accessory protein UreG.